Here is a 998-residue protein sequence, read N- to C-terminus: Protein Smaug (998 aa).

The span at 1–37 (MKYATGTDNAMTSGISGQTNNSNSASNEMQPTTSTPT) shows a compositional bias: polar residues. Disordered regions lie at residues 1–45 (MKYA…EATS), 50–69 (TATY…QSQP), and 329–370 (LCPA…GSSS). The span at 329–338 (LCPASGSRSS) shows a compositional bias: low complexity. Residues S564 and S575 each carry the phosphoserine modification. Residues 583 to 763 (EFKPNYIKFH…KDLKFKLSKM (181 aa)) form an interaction with cup region. One can recognise an SAM domain in the interval 600–654 (GIGLWLKSLRLHKYIELFKNMTYEEMLLITEDFLQSVGVTKGASHKLALCIDKLK). Disordered regions lie at residues 773–892 (HVKP…MQQM) and 942–977 (NNGS…QQPK). 2 stretches are compositionally biased toward polar residues: residues 801-822 (KSGS…NFSL) and 854-864 (HQPQYKSSSYP). The residue at position 971 (S971) is a Phosphoserine.

The protein belongs to the SMAUG family. Interacts with oskar (osk). Binds to the 3'-UTR of nos. Interacts with cup, which in turn recruits eIF4-E, leading to an indirect interaction between smg and eIF4-E that prevents mRNA translation.

It is found in the cytoplasm. Its function is as follows. Translation regulator that binds to the 3'-UTR of specific mRNAs such as nanos (nos) and prevent their translation. Prevents translation of unlocalized nos in the bulk cytoplasm via the recruitment of cup. The protein is Protein Smaug of Drosophila simulans (Fruit fly).